A 238-amino-acid polypeptide reads, in one-letter code: Sugar fermentation stimulation protein homolog (238 aa).

Belongs to the SfsA family.

The polypeptide is Sugar fermentation stimulation protein homolog (Alteromonas mediterranea (strain DSM 17117 / CIP 110805 / LMG 28347 / Deep ecotype)).